Consider the following 202-residue polypeptide: Small ribosomal subunit protein uS4c (202 aa).

One can recognise an S4 RNA-binding domain in the interval 90 to 153; the sequence is MRLDNIIFRL…KSQAIISKNI (64 aa).

The protein belongs to the universal ribosomal protein uS4 family. In terms of assembly, part of the 30S ribosomal subunit. Contacts protein S5. The interaction surface between S4 and S5 is involved in control of translational fidelity.

The protein resides in the plastid. The protein localises to the chloroplast. Functionally, one of the primary rRNA binding proteins, it binds directly to 16S rRNA where it nucleates assembly of the body of the 30S subunit. With S5 and S12 plays an important role in translational accuracy. In Splachnum sphaericum (Pinkstink dung moss), this protein is Small ribosomal subunit protein uS4c (rps4).